Here is a 149-residue protein sequence, read N- to C-terminus: Large ribosomal subunit protein bL9 (149 aa).

The protein belongs to the bacterial ribosomal protein bL9 family.

Binds to the 23S rRNA. This is Large ribosomal subunit protein bL9 from Bacillus pumilus (strain SAFR-032).